A 354-amino-acid polypeptide reads, in one-letter code: Anthranilate phosphoribosyltransferase (354 aa).

Belongs to the anthranilate phosphoribosyltransferase family.

It carries out the reaction N-(5-phospho-beta-D-ribosyl)anthranilate + diphosphate = 5-phospho-alpha-D-ribose 1-diphosphate + anthranilate. The protein operates within amino-acid biosynthesis; L-tryptophan biosynthesis; L-tryptophan from chorismate: step 2/5. The chain is Anthranilate phosphoribosyltransferase (trp4) from Schizosaccharomyces pombe (strain 972 / ATCC 24843) (Fission yeast).